The primary structure comprises 926 residues: Piwi-like protein Ago3 (926 aa).

The interval 1 to 62 is disordered; that stretch reads MADPGKGRGR…PSTSGVSIGG (62 aa). A compositionally biased stretch (low complexity) spans 26-56; the sequence is SPSQSESQSPESTPEQSTAPSTIASATPSTS. Residues 339–455 form the PAZ domain; the sequence is TVLSLIKEVV…LIPELCQLTG (117 aa). Residues 620–912 enclose the Piwi domain; sequence LVVAICSTKR…LSYLVGQCVH (293 aa). Gln-672 is a Mg(2+) binding site. Catalysis depends on residues Asp-697, Glu-735, Asp-767, and His-901. Leu-926 lines the Mg(2+) pocket.

This sequence belongs to the argonaute family. Piwi subfamily. Interacts (when symmetrically methylated) with Papi/TDRKH. Interacts with Vasa. Mg(2+) is required as a cofactor. Arginine methylation is required for the interaction with Tudor domain-containing protein Papi/TDRKH. As to expression, highly expressed in the larval testis, pupal ovary and adult eggs.

The protein localises to the cytoplasm. In terms of biological role, endoribonuclease that plays a central role during spermatogenesis by repressing transposable elements and preventing their mobilization, which is essential for the germline integrity. Plays an essential role in meiotic differentiation of spermatocytes, germ cell differentiation and in self-renewal of spermatogonial stem cells. Its presence in oocytes suggests that it may participate in similar functions during oogenesis in females. Acts via the piRNA metabolic process, which mediates the repression of transposable elements during meiosis by forming complexes composed of piRNAs and Piwi proteins and govern the methylation and subsequent repression of transposons. Directly binds piRNAs, a class of 24 to 30 nucleotide RNAs that are generated by a Dicer-independent mechanism and are primarily derived from transposons and other repeated sequence elements. Strongly prefers a have adenine at position 10 of their guide (g10A preference). Plays a key role in the piRNA amplification loop, also named ping-pong amplification cycle: antisense piRNA-bound Siwi and sense piRNA-bound Ago3 reciprocally cleave complementary transcripts, to couple the amplification of piRNAs with the repression of transposable elements. The protein is Piwi-like protein Ago3 (AGO3) of Bombyx mori (Silk moth).